The following is a 153-amino-acid chain: UPF0178 protein MXAN_5526 (153 aa).

Belongs to the UPF0178 family.

This chain is UPF0178 protein MXAN_5526, found in Myxococcus xanthus (strain DK1622).